The primary structure comprises 222 residues: Probable GTP-binding protein EngB (222 aa).

The EngB-type G domain occupies 25 to 199 (AGVEVAFAGR…SQLLQNWFDT (175 aa)). GTP-binding positions include 33–40 (GRSNAGKS), 60–64 (GRTQH), 78–81 (DLPG), 145–148 (TKAD), and 178–180 (FSS). Mg(2+) contacts are provided by S40 and T62.

It belongs to the TRAFAC class TrmE-Era-EngA-EngB-Septin-like GTPase superfamily. EngB GTPase family. Requires Mg(2+) as cofactor.

Necessary for normal cell division and for the maintenance of normal septation. The chain is Probable GTP-binding protein EngB from Nitrosomonas europaea (strain ATCC 19718 / CIP 103999 / KCTC 2705 / NBRC 14298).